The sequence spans 224 residues: F420-dependent NADP reductase (224 aa).

NADP(+) is bound by residues 9 to 12 (TGDQ), 31 to 32 (SR), K36, V74, V100, and A145.

This sequence belongs to the F420-dependent NADP reductase family. As to quaternary structure, homotetramer.

The catalysed reaction is reduced coenzyme F420-(gamma-L-Glu)(n) + NADP(+) = oxidized coenzyme F420-(gamma-L-Glu)(n) + NADPH + 2 H(+). In terms of biological role, catalyzes the reduction of NADP(+) with F420H(2) via hydride transfer, and the reverse reaction, i.e. the reduction of F420 with NADPH. Probably functions in the regeneration of NADPH required in biosynthetic reactions. The protein is F420-dependent NADP reductase of Methanothermobacter marburgensis (strain ATCC BAA-927 / DSM 2133 / JCM 14651 / NBRC 100331 / OCM 82 / Marburg) (Methanobacterium thermoautotrophicum).